Here is a 470-residue protein sequence, read N- to C-terminus: UDP-N-acetylmuramate--L-alanine ligase (470 aa).

Residue 118–124 (GTHGKTT) coordinates ATP.

This sequence belongs to the MurCDEF family.

The protein localises to the cytoplasm. It carries out the reaction UDP-N-acetyl-alpha-D-muramate + L-alanine + ATP = UDP-N-acetyl-alpha-D-muramoyl-L-alanine + ADP + phosphate + H(+). It participates in cell wall biogenesis; peptidoglycan biosynthesis. Functionally, cell wall formation. The polypeptide is UDP-N-acetylmuramate--L-alanine ligase (Cereibacter sphaeroides (strain ATCC 17025 / ATH 2.4.3) (Rhodobacter sphaeroides)).